We begin with the raw amino-acid sequence, 474 residues long: tRNA-2-methylthio-N(6)-dimethylallyladenosine synthase (474 aa).

Residues 3-120 form the MTTase N-terminal domain; it reads KKLHIKTWGC…LPEMINSVRG (118 aa). Positions 12, 49, 83, 157, 161, and 164 each coordinate [4Fe-4S] cluster. The Radical SAM core domain occupies 143 to 375; that stretch reads RAEGPTAFVS…QERINQQAMA (233 aa). Residues 378-441 enclose the TRAM domain; that stretch reads RRMLGTVQRI…TNSLRGKIVR (64 aa).

It belongs to the methylthiotransferase family. MiaB subfamily. Monomer. [4Fe-4S] cluster is required as a cofactor.

The protein resides in the cytoplasm. It carries out the reaction N(6)-dimethylallyladenosine(37) in tRNA + (sulfur carrier)-SH + AH2 + 2 S-adenosyl-L-methionine = 2-methylsulfanyl-N(6)-dimethylallyladenosine(37) in tRNA + (sulfur carrier)-H + 5'-deoxyadenosine + L-methionine + A + S-adenosyl-L-homocysteine + 2 H(+). Functionally, catalyzes the methylthiolation of N6-(dimethylallyl)adenosine (i(6)A), leading to the formation of 2-methylthio-N6-(dimethylallyl)adenosine (ms(2)i(6)A) at position 37 in tRNAs that read codons beginning with uridine. This Klebsiella pneumoniae subsp. pneumoniae (strain ATCC 700721 / MGH 78578) protein is tRNA-2-methylthio-N(6)-dimethylallyladenosine synthase.